The sequence spans 746 residues: Dystrobrevin alpha (746 aa).

The segment at 1–288 is interaction with MAGEE1; it reads MIEDSGKRGN…SHSNQHQMKE (288 aa). A ZZ-type zinc finger spans residues 238-294; it reads FHPVECSYCHSESMMGFRYRCQQCHNYQLCQDCFWRGHAGGSHSNQHQMKEYTSWKS. Zn(2+) contacts are provided by C243, C246, C258, C261, C267, C270, H280, and H284. The interval 397 to 447 is syntrophin-binding region; that stretch reads DRLADEHVLIGLYVNMLRNDPPCMLESSNRLDEEHRLIARYAARLAAESSS. A coiled-coil region spans residues 458–557; it reads DISFTIDANK…KLLKEEELKQ (100 aa). 3 disordered regions span residues 555–577, 646–667, and 684–721; these read LKQG…SRPI, ETES…APSP, and YIHG…VRQL. Low complexity predominate over residues 563–576; sequence SSPRSSPSHTISRP. Position 666 is a phosphoserine (S666).

This sequence belongs to the dystrophin family. Dystrobrevin subfamily. Interacts with dystrophin, utrophin and the syntrophins SNTA1, SNTB1, SNTB2, SNTG1 and SNTG2. Binds dystrobrevin binding protein 1. Interacts with MAGEE1. Interacts with Ctnnal1. The interaction is required for correct localization of both Ctnnal1 and Dtna. In terms of assembly, does not interact with utrophin. As to quaternary structure, does not interact with syntrophin. In terms of processing, phosphorylation of isoform 2 on tyrosine kinase substrate domain present in the C-terminus. As to expression, expressed in skeletal muscle, heart, lung and brain. Sarcolemma and neuromuscular junction in skeletal muscle. Isoform 2 is restricted to the neuromuscular junction. Isoforms 5 and 6 are only expressed in muscle.

It is found in the cytoplasm. The protein localises to the synapse. The protein resides in the cell membrane. Involved in synapse maturation and required for normal muscle function. This chain is Dystrobrevin alpha (Dtna), found in Mus musculus (Mouse).